The primary structure comprises 546 residues: Probable protein kinase UbiB (546 aa).

A Protein kinase domain is found at 124-502; sequence DFEIKPLASA…HVRQGQSRYF (379 aa). Residues 130-138 and Lys153 contribute to the ATP site; that span reads LASASIAQV. Asp288 functions as the Proton acceptor in the catalytic mechanism. 2 helical membrane passes run 501–521 and 522–542; these read YFLG…VSRP and EWGL…FVGW.

This sequence belongs to the ABC1 family. UbiB subfamily.

The protein localises to the cell inner membrane. The protein operates within cofactor biosynthesis; ubiquinone biosynthesis [regulation]. In terms of biological role, is probably a protein kinase regulator of UbiI activity which is involved in aerobic coenzyme Q (ubiquinone) biosynthesis. The protein is Probable protein kinase UbiB of Escherichia coli O45:K1 (strain S88 / ExPEC).